The following is a 619-amino-acid chain: Chaperone protein HscA homolog (619 aa).

The protein belongs to the heat shock protein 70 family.

Functionally, chaperone involved in the maturation of iron-sulfur cluster-containing proteins. Has a low intrinsic ATPase activity which is markedly stimulated by HscB. This is Chaperone protein HscA homolog from Azotobacter vinelandii.